The primary structure comprises 1358 residues: DNA-directed RNA polymerase subunit beta (1358 aa).

This sequence belongs to the RNA polymerase beta chain family. The RNAP catalytic core consists of 2 alpha, 1 beta, 1 beta' and 1 omega subunit. When a sigma factor is associated with the core the holoenzyme is formed, which can initiate transcription.

The catalysed reaction is RNA(n) + a ribonucleoside 5'-triphosphate = RNA(n+1) + diphosphate. DNA-dependent RNA polymerase catalyzes the transcription of DNA into RNA using the four ribonucleoside triphosphates as substrates. This Azotobacter vinelandii (strain DJ / ATCC BAA-1303) protein is DNA-directed RNA polymerase subunit beta.